We begin with the raw amino-acid sequence, 210 residues long: uncharacterized protein (210 aa).

Positions 1–20 (MRVITLSGITLFLLASLASA) are cleaved as a signal peptide. Over 21-175 (IELTFKLENQ…YSTVKSTQAR (155 aa)) the chain is Lumenal. Residues 32 to 115 (KQCYYLDSFH…DKIVTMEITM (84 aa)) form the GOLD domain. Residue N165 is glycosylated (N-linked (GlcNAc...) asparagine). The chain crosses the membrane as a helical span at residues 176–196 (IFWFSLAESIMVVALSALQVF). Residues 197–210 (IVKTFFKRSGRRGV) are Cytoplasmic-facing.

The protein belongs to the EMP24/GP25L family.

It localises to the endoplasmic reticulum membrane. This is an uncharacterized protein from Schizosaccharomyces pombe (strain 972 / ATCC 24843) (Fission yeast).